Consider the following 525-residue polypeptide: GMP synthase [glutamine-hydrolyzing] (525 aa).

The Glutamine amidotransferase type-1 domain maps to 9–207 (RILILDFGSQ…VRDICQCEAL (199 aa)). Cys-86 functions as the Nucleophile in the catalytic mechanism. Active-site residues include His-181 and Glu-183. A GMPS ATP-PPase domain is found at 208–400 (WTPAKIIDDA…LGLPYNMLYR (193 aa)). 235–241 (SGGVDSS) serves as a coordination point for ATP.

In terms of assembly, homodimer.

It catalyses the reaction XMP + L-glutamine + ATP + H2O = GMP + L-glutamate + AMP + diphosphate + 2 H(+). Its pathway is purine metabolism; GMP biosynthesis; GMP from XMP (L-Gln route): step 1/1. Its function is as follows. Catalyzes the synthesis of GMP from XMP. This is GMP synthase [glutamine-hydrolyzing] from Pectobacterium carotovorum subsp. carotovorum (strain PC1).